Here is a 323-residue protein sequence, read N- to C-terminus: Quinolinate synthase (323 aa).

His38 and Ser55 together coordinate iminosuccinate. Cys100 serves as a coordination point for [4Fe-4S] cluster. Residues 126–128 (YIN) and Ser143 contribute to the iminosuccinate site. Cys186 is a binding site for [4Fe-4S] cluster. Residues 212 to 214 (HPE) and Thr229 each bind iminosuccinate. Cys279 provides a ligand contact to [4Fe-4S] cluster.

The protein belongs to the quinolinate synthase family. Type 2 subfamily. [4Fe-4S] cluster is required as a cofactor.

It localises to the cytoplasm. The catalysed reaction is iminosuccinate + dihydroxyacetone phosphate = quinolinate + phosphate + 2 H2O + H(+). Its pathway is cofactor biosynthesis; NAD(+) biosynthesis; quinolinate from iminoaspartate: step 1/1. Functionally, catalyzes the condensation of iminoaspartate with dihydroxyacetone phosphate to form quinolinate. The sequence is that of Quinolinate synthase from Gloeothece citriformis (strain PCC 7424) (Cyanothece sp. (strain PCC 7424)).